The primary structure comprises 427 residues: Light-independent protochlorophyllide reductase subunit N (427 aa).

Residues cysteine 28, cysteine 53, and cysteine 114 each coordinate [4Fe-4S] cluster.

The protein belongs to the BchN/ChlN family. In terms of assembly, protochlorophyllide reductase is composed of three subunits; BchL, BchN and BchB. Forms a heterotetramer of two BchB and two BchN subunits. [4Fe-4S] cluster serves as cofactor.

The enzyme catalyses chlorophyllide a + oxidized 2[4Fe-4S]-[ferredoxin] + 2 ADP + 2 phosphate = protochlorophyllide a + reduced 2[4Fe-4S]-[ferredoxin] + 2 ATP + 2 H2O. It functions in the pathway porphyrin-containing compound metabolism; bacteriochlorophyll biosynthesis (light-independent). Its function is as follows. Component of the dark-operative protochlorophyllide reductase (DPOR) that uses Mg-ATP and reduced ferredoxin to reduce ring D of protochlorophyllide (Pchlide) to form chlorophyllide a (Chlide). This reaction is light-independent. The NB-protein (BchN-BchB) is the catalytic component of the complex. The polypeptide is Light-independent protochlorophyllide reductase subunit N (Jannaschia sp. (strain CCS1)).